The following is a 233-amino-acid chain: uncharacterized protein (233 aa).

Over residues 1–10 the composition is skewed to basic residues; the sequence is MSSKLSKKKL. The segment at 1–90 is disordered; it reads MSSKLSKKKL…KRQKGKNNDR (90 aa). Basic and acidic residues predominate over residues 11–56; it reads KSLEYRSKKFDKKSQSLEEHEKKVQQKNEELEKKAADKISRDELPE. Over residues 76–85 the composition is skewed to basic residues; that stretch reads KTLKSKRQKG. An RRM domain is found at 92–171; it reads VILFVGNLPK…RKINIELTAG (80 aa). Composition is skewed to basic and acidic residues over residues 194-216 and 224-233; these read MRQR…KAVA and IHPDRLRLLQ. Residues 194 to 233 are disordered; the sequence is MRQRVASEEQQAGEEKMARKAVADEGLESGIHPDRLRLLQ.

Its subcellular location is the nucleus. The protein localises to the nucleolus. This is an uncharacterized protein from Schizosaccharomyces pombe (strain 972 / ATCC 24843) (Fission yeast).